Consider the following 43-residue polypeptide: MAKLHDYYKDEVVQKLMSQFGYHSVMQVPRVEKITLNMGVGEA.

The protein belongs to the universal ribosomal protein uL5 family. As to quaternary structure, part of the 50S ribosomal subunit; part of the 5S rRNA/L5/L18/L25 subcomplex. Contacts the 5S rRNA and the P site tRNA. Forms a bridge to the 30S subunit in the 70S ribosome.

This is one of the proteins that bind and probably mediate the attachment of the 5S RNA into the large ribosomal subunit, where it forms part of the central protuberance. In the 70S ribosome it contacts protein S13 of the 30S subunit (bridge B1b), connecting the 2 subunits; this bridge is implicated in subunit movement. Contacts the P site tRNA; the 5S rRNA and some of its associated proteins might help stabilize positioning of ribosome-bound tRNAs. The chain is Large ribosomal subunit protein uL5 (rplE) from Proteus vulgaris.